The primary structure comprises 101 residues: DNA-binding protein TubR (101 aa).

As to quaternary structure, homodimer. Dimers bind to DNA, forming a protein-bound filament which may form a helix around the TubZ filament.

Functionally, a DNA-binding protein that is part of the type III plasmid partition system used to ensure correct segregation of the pBM400 plasmid. Binds the plasmid origin of replication, probably cooperatively, forming a ring or short helix with external DNA. Its effect on RNA expression has not been shown. This Priestia megaterium (strain ATCC 12872 / QMB1551) (Bacillus megaterium) protein is DNA-binding protein TubR.